Reading from the N-terminus, the 329-residue chain is Biotin synthase (329 aa).

Positions F46–S275 constitute a Radical SAM core domain. [4Fe-4S] cluster contacts are provided by C64, C68, and C71. [2Fe-2S] cluster contacts are provided by C108, C140, C200, and R273.

It belongs to the radical SAM superfamily. Biotin synthase family. In terms of assembly, homodimer. [4Fe-4S] cluster serves as cofactor. [2Fe-2S] cluster is required as a cofactor.

It catalyses the reaction (4R,5S)-dethiobiotin + (sulfur carrier)-SH + 2 reduced [2Fe-2S]-[ferredoxin] + 2 S-adenosyl-L-methionine = (sulfur carrier)-H + biotin + 2 5'-deoxyadenosine + 2 L-methionine + 2 oxidized [2Fe-2S]-[ferredoxin]. Its pathway is cofactor biosynthesis; biotin biosynthesis; biotin from 7,8-diaminononanoate: step 2/2. In terms of biological role, catalyzes the conversion of dethiobiotin (DTB) to biotin by the insertion of a sulfur atom into dethiobiotin via a radical-based mechanism. The protein is Biotin synthase of Thermus thermophilus (strain ATCC BAA-163 / DSM 7039 / HB27).